Here is a 97-residue protein sequence, read N- to C-terminus: Defensin-like protein 245 (97 aa).

Positions 1–24 (MKFAAILLVTCVLFSLLPSHLSQG) are cleaved as a signal peptide. Intrachain disulfides connect Cys39-Cys96, Cys50-Cys79, Cys58-Cys89, and Cys77-Cys91.

This sequence belongs to the DEFL family. In terms of tissue distribution, flower buds and roots.

The protein resides in the secreted. The chain is Defensin-like protein 245 (SCRL4) from Arabidopsis thaliana (Mouse-ear cress).